Consider the following 85-residue polypeptide: MEGEGRREDGDCSYLCIPFNSIRDIFQSFFTRFRGLTPDNSPVTISQEVEEETEVVNIPRSVVSGNVAARKGKQQTSSGKGGGTN.

Positions 1–62 (MEGEGRREDG…TEVVNIPRSV (62 aa)) are excised as a propeptide. The tract at residues 66–85 (NVAARKGKQQTSSGKGGGTN) is disordered.

The protein belongs to the brassicaceae elicitor peptide family.

In terms of biological role, elicitor of plant defense. The protein is Elicitor peptide 7 (PEP7) of Arabidopsis thaliana (Mouse-ear cress).